Here is a 319-residue protein sequence, read N- to C-terminus: Movement protein (319 aa).

The disordered stretch occupies residues 1-20 (MNSSVEKQNSEIPEKENEEF). Residues 289–319 (KETSPSSSHQKSLEEISDKIDTLVVKLNNIS) adopt a coiled-coil conformation.

This sequence belongs to the caulimoviridae movement protein family. In terms of assembly, homotrimer, through the coiled-coil domain. Interacts with VAP.

The protein resides in the host cell junction. It is found in the host plasmodesma. Functionally, transports viral genome to neighboring plant cells directly through plasmosdesmata, without any budding. The movement protein allows efficient cell to cell propagation, by bypassing the host cell wall barrier. Acts by forming tubules structures that increase the size exclusion limit (SEL) of plasmodesmata, thereby allowing viral ribonucleocapsids to spread directly to neighboring cells. The sequence is that of Movement protein from Dianthus caryophyllus (Carnation).